A 342-amino-acid chain; its full sequence is Spermidine synthase (342 aa).

The tract at residues 9-42 (MKGTELPVKRPREEEAETEMEAANNSNNGCEKEE) is disordered. One can recognise a PABS domain in the interval 52–289 (PGWFSEISPL…GMIGFMLCST (238 aa)). Q83 is an S-adenosyl 3-(methylsulfanyl)propylamine binding site. Putrescine is bound at residue Y113. S-adenosyl 3-(methylsulfanyl)propylamine is bound by residues Q114, D138, E158, 189–190 (DG), and D208. Catalysis depends on D208, which acts as the Proton acceptor. Putrescine-binding positions include 208 to 211 (DSSD) and Y277.

Belongs to the spermidine/spermine synthase family.

It catalyses the reaction S-adenosyl 3-(methylsulfanyl)propylamine + putrescine = S-methyl-5'-thioadenosine + spermidine + H(+). It functions in the pathway amine and polyamine biosynthesis; spermidine biosynthesis; spermidine from putrescine: step 1/1. The sequence is that of Spermidine synthase (SPDSYN) from Solanum lycopersicum (Tomato).